A 201-amino-acid polypeptide reads, in one-letter code: Holliday junction resolvase RecU (201 aa).

Residues Thr85, Asp87, Asp100, and Gln119 each coordinate Mg(2+).

Belongs to the RecU family. Requires Mg(2+) as cofactor.

Its subcellular location is the cytoplasm. It catalyses the reaction Endonucleolytic cleavage at a junction such as a reciprocal single-stranded crossover between two homologous DNA duplexes (Holliday junction).. Its function is as follows. Endonuclease that resolves Holliday junction intermediates in genetic recombination. Cleaves mobile four-strand junctions by introducing symmetrical nicks in paired strands. Promotes annealing of linear ssDNA with homologous dsDNA. Required for DNA repair, homologous recombination and chromosome segregation. This chain is Holliday junction resolvase RecU, found in Pediococcus pentosaceus (strain ATCC 25745 / CCUG 21536 / LMG 10740 / 183-1w).